Here is a 194-residue protein sequence, read N- to C-terminus: ATP-dependent Clp protease proteolytic subunit 3 (194 aa).

Serine 96 (nucleophile) is an active-site residue. Histidine 121 is a catalytic residue.

This sequence belongs to the peptidase S14 family. As to quaternary structure, fourteen ClpP subunits assemble into 2 heptameric rings which stack back to back to give a disk-like structure with a central cavity, resembling the structure of eukaryotic proteasomes.

It localises to the cytoplasm. The catalysed reaction is Hydrolysis of proteins to small peptides in the presence of ATP and magnesium. alpha-casein is the usual test substrate. In the absence of ATP, only oligopeptides shorter than five residues are hydrolyzed (such as succinyl-Leu-Tyr-|-NHMec, and Leu-Tyr-Leu-|-Tyr-Trp, in which cleavage of the -Tyr-|-Leu- and -Tyr-|-Trp bonds also occurs).. Its function is as follows. Cleaves peptides in various proteins in a process that requires ATP hydrolysis. Has a chymotrypsin-like activity. Plays a major role in the degradation of misfolded proteins. The chain is ATP-dependent Clp protease proteolytic subunit 3 from Rhizobium johnstonii (strain DSM 114642 / LMG 32736 / 3841) (Rhizobium leguminosarum bv. viciae).